Here is a 573-residue protein sequence, read N- to C-terminus: Urease subunit alpha 2 (573 aa).

The 439-residue stretch at 135–573 folds into the Urease domain; it reads GGMDTHVHYI…ISLNQLYFFS (439 aa). Ni(2+) is bound by residues H140, H142, and K223. At K223 the chain carries N6-carboxylysine. H225 provides a ligand contact to substrate. Residues H252 and H278 each contribute to the Ni(2+) site. H326 functions as the Proton donor in the catalytic mechanism. Position 366 (D366) interacts with Ni(2+).

The protein belongs to the metallo-dependent hydrolases superfamily. Urease alpha subunit family. As to quaternary structure, heterotrimer of UreA (gamma), UreB (beta) and UreC (alpha) subunits. Three heterotrimers associate to form the active enzyme. Ni cation is required as a cofactor. Carboxylation allows a single lysine to coordinate two nickel ions.

The protein resides in the cytoplasm. It carries out the reaction urea + 2 H2O + H(+) = hydrogencarbonate + 2 NH4(+). Its pathway is nitrogen metabolism; urea degradation; CO(2) and NH(3) from urea (urease route): step 1/1. The chain is Urease subunit alpha 2 from Brucella melitensis biotype 1 (strain ATCC 23456 / CCUG 17765 / NCTC 10094 / 16M).